A 499-amino-acid chain; its full sequence is Trichothecene C-4 hydroxylase (499 aa).

A helical transmembrane segment spans residues 7-29; sequence VGVAVQLVLTVLLASIPLRVIWN. 2 N-linked (GlcNAc...) asparagine glycosylation sites follow: Asn-173 and Asn-287. Cys-442 serves as a coordination point for heme. The N-linked (GlcNAc...) asparagine glycan is linked to Asn-473.

It belongs to the cytochrome P450 family. Requires heme as cofactor.

The protein resides in the membrane. The protein operates within sesquiterpene biosynthesis; trichothecene biosynthesis. In terms of biological role, trichothecene C-4 hydroxylase; part of the gene cluster that mediates the production of the antimicrobial trichothecene harzianum A (HA) that plays a role in Botrytis cinerea antagonistic activity and plant defense priming. The biosynthesis of harzianum A begins with the cyclization of farnesyl diphosphate to trichodiene and is catalyzed by the trichodiene synthase TRI5. Trichodiene undergoes a series of oxygenations catalyzed by the cytochrome P450 monooxygenase TRI4. TRI4 controls the addition of 3 oxygens at C-2, C-11, and the C-12, C-13-epoxide to form the intermediate isotrichodiol. Isotrichodiol then undergoes a non-enzymatic isomerization and cyclization to form 12,13-epoxytrichothec-9-ene (EPT) which is further converted to trichodermol by the cytochrome P450 monooxygenase TRI11 via C-4 hydroxylation. The last step of HA synthesis is esterification of an octatriendioyl moiety to the C-4 oxygen of trichodermol. The octatriendioyl moiety is probably produced by the polyketide synthase TRI17 and the esterification performed by the trichothecene O-acetyltransferase TRI3. This chain is Trichothecene C-4 hydroxylase, found in Trichoderma arundinaceum.